Consider the following 122-residue polypeptide: Large ribosomal subunit protein bL17 (122 aa).

It belongs to the bacterial ribosomal protein bL17 family. In terms of assembly, part of the 50S ribosomal subunit. Contacts protein L32.

This chain is Large ribosomal subunit protein bL17, found in Staphylococcus carnosus (strain TM300).